The sequence spans 427 residues: Glutamate-1-semialdehyde 2,1-aminomutase (427 aa).

Lys-265 is subject to N6-(pyridoxal phosphate)lysine.

Belongs to the class-III pyridoxal-phosphate-dependent aminotransferase family. HemL subfamily. Homodimer. Requires pyridoxal 5'-phosphate as cofactor.

The protein localises to the cytoplasm. It catalyses the reaction (S)-4-amino-5-oxopentanoate = 5-aminolevulinate. The protein operates within porphyrin-containing compound metabolism; protoporphyrin-IX biosynthesis; 5-aminolevulinate from L-glutamyl-tRNA(Glu): step 2/2. The sequence is that of Glutamate-1-semialdehyde 2,1-aminomutase from Pseudomonas fluorescens (strain SBW25).